Consider the following 313-residue polypeptide: MRTLYPEITPYQQGSLKVDDRHTLYFEQCGNPHGKPVVMLHGGPGGGCNDKMRRFHDPAKYRIVLFDQRGSGRSTPHADLVDNTTWDLVADIERLRTHLGVDRWQVFGGSWGSTLALAYAADPSAAGHQLVLRGIFLLRRFELEWFYQEGASRLFPDAWEHYLNAIPPVERADLMSAFHRRLTSDDEATRLAAAKAWSVWEGATSFLHVDEDFVTGHEDAHFALAFARIENHYFVNGGFFEVEDQLLRDAHRIADIPGVIVHGRYDVVCPLQSAWDLHKAWPKAQLQISPASGHSAFEPENVDALVRATDGFA.

The region spanning 35-298 (KPVVMLHGGP…SPASGHSAFE (264 aa)) is the AB hydrolase-1 domain. The active-site Nucleophile is S110. The active site involves D266. H294 serves as the catalytic Proton donor.

Belongs to the peptidase S33 family. As to quaternary structure, homooligomer.

The protein resides in the cytoplasm. It carries out the reaction Release of N-terminal proline from a peptide.. Functionally, may be involved in proline metabolism and sensitivity to ascamycin. Has ascamycin dealanylating activity. This chain is Proline iminopeptidase (pip), found in Xanthomonas citri (Xanthomonas campestris pv. citri).